The sequence spans 356 residues: Protein-arginine kinase (356 aa).

Residues 24-254 form the Phosphagen kinase C-terminal domain; the sequence is IVLSTRIRLA…HQLIQQEKAA (231 aa). ATP is bound by residues 27–31, His92, Arg125, 176–180, and 207–212; these read STRIR, RASVM, and RGIYGE. The RDXXRA motif of the pArg binding pocket involved in allosteric regulation signature appears at 337–342; the sequence is RDYRRA.

Belongs to the ATP:guanido phosphotransferase family.

It carries out the reaction L-arginyl-[protein] + ATP = N(omega)-phospho-L-arginyl-[protein] + ADP + H(+). With respect to regulation, appears to be allosterically activated by the binding of pArg-containing polypeptides to the pArg-binding pocket localized in the C-terminal domain of McsB. Catalyzes the specific phosphorylation of arginine residues in a large number of proteins. Is part of the bacterial stress response system. Protein arginine phosphorylation has a physiologically important role and is involved in the regulation of many critical cellular processes, such as protein homeostasis, motility, competence, and stringent and stress responses, by regulating gene expression and protein activity. This is Protein-arginine kinase from Bacillus cytotoxicus (strain DSM 22905 / CIP 110041 / 391-98 / NVH 391-98).